The following is a 280-amino-acid chain: 3-methyl-2-oxobutanoate hydroxymethyltransferase (280 aa).

Positions 49 and 88 each coordinate Mg(2+). 3-methyl-2-oxobutanoate is bound by residues 49–50, aspartate 88, and lysine 118; that span reads DS. Glutamate 120 is a Mg(2+) binding site. Residue glutamate 187 is the Proton acceptor of the active site.

This sequence belongs to the PanB family. As to quaternary structure, homodecamer; pentamer of dimers. Mg(2+) serves as cofactor.

It is found in the cytoplasm. The enzyme catalyses 3-methyl-2-oxobutanoate + (6R)-5,10-methylene-5,6,7,8-tetrahydrofolate + H2O = 2-dehydropantoate + (6S)-5,6,7,8-tetrahydrofolate. Its pathway is cofactor biosynthesis; (R)-pantothenate biosynthesis; (R)-pantoate from 3-methyl-2-oxobutanoate: step 1/2. Catalyzes the reversible reaction in which hydroxymethyl group from 5,10-methylenetetrahydrofolate is transferred onto alpha-ketoisovalerate to form ketopantoate. This is 3-methyl-2-oxobutanoate hydroxymethyltransferase from Xanthobacter autotrophicus (strain ATCC BAA-1158 / Py2).